Reading from the N-terminus, the 435-residue chain is Mitogen-activated protein kinase HOG1 (435 aa).

Thr2 bears the N-acetylthreonine mark. A Protein kinase domain is found at 23–302; the sequence is YNDLNPVGMG…AADALAHPYS (280 aa). Residues 29 to 37 and Lys52 contribute to the ATP site; that span reads VGMGAFGLV. The active-site Proton acceptor is Asp144. Arsenite-binding residues include Cys156 and Cys161. The residue at position 174 (Thr174) is a Phosphothreonine; by PBS2. A TXY motif is present at residues 174-176; the sequence is TGY. Tyr176 is modified (phosphotyrosine; by PBS2). Residue Cys205 coordinates arsenite.

It belongs to the protein kinase superfamily. Ser/Thr protein kinase family. MAP kinase subfamily. HOG1 sub-subfamily. Interacts with CDC37, HOT1, KIN28, PTP2, PTP3, RBP1, RCK2, RPD3, SIC1, SMP1 and SIN4. Mg(2+) serves as cofactor. Post-translationally, activated by PBS2-mediated concomitant phosphorylation at Thr-174 and Tyr-176. Dually phosphorylated on Thr-174 and Tyr-176, which activates the enzyme.

The protein localises to the cytoplasm. It is found in the nucleus. The enzyme catalyses L-seryl-[protein] + ATP = O-phospho-L-seryl-[protein] + ADP + H(+). It catalyses the reaction L-threonyl-[protein] + ATP = O-phospho-L-threonyl-[protein] + ADP + H(+). With respect to regulation, activated by tyrosine and threonine phosphorylation. Inactivated by dephosphorylation via recruitment of PTC1 to the PBS2-HOG1 complex after adaptation to osmotic stress. PTP2 and PTP3 inactivate HOG1 by dephosphorylating Tyr-176, while the PP2Cs PTC1 and PTC2 or PTC3 dephosphorylate Thr-174 in the activation loop. Proline-directed serine/threonine-protein kinase involved in a signal transduction pathway that is activated by changes in the osmolarity of the extracellular environment. Controls osmotic regulation of transcription via the stress response element (STRE) in promoters of target genes. Upon osmotic shock, associates with the SKO1-SSN6-TUP1 complex, phosphorylates SKO1, and converts it into an activator that subsequently recruits Swi/Snf and SAGA complexes. Activates the SMP1 transcription factor and the RCK2 kinase, both also involved in the regulation of the expression of a subset of osmotic stress-related genes. Phosphorylation of HSL1 by HOG1 leads to a G2 arrest essential for cell survival at high osmolarity. Also mediates cell-cycle arrest in G1 phase by the dual targeting of SIC1. Phosphorylates methyltransferase DOT1 at least on 'Ser-565' and 'Thr-576'. Regulates MFA2 ARE-mediated translation in response to carbon source. Targets RPD3 histone deacetylase to osmoresponsive promoters to induce gene expression on stress. Required for the Golgi apparatus localization of MNN1. Plays an essential role in maintaining water homeostasis, arsenite detoxification, copper-resistance, cold-resistance, hydrogen peroxide response, adaptation to citric acid stress, and repression of the mating pathway activity. Functions as an arsenic sensor and effector via direct binding to arsenic and subsequent phosphorylation of the ARR1 transcription factor. The chain is Mitogen-activated protein kinase HOG1 (HOG1) from Saccharomyces cerevisiae (strain ATCC 204508 / S288c) (Baker's yeast).